The sequence spans 500 residues: NAD(P)H-quinone oxidoreductase chain 4, chloroplastic (500 aa).

15 helical membrane passes run 4-24 (FYWLTIIVVLPISAGSLIALL), 35-55 (YTICICLFELLLTTYVFCYHF), 80-100 (LGIDGLSIGPILLTGFITTLA), 113-130 (LFHFLMLAMYSGQIGSFS), 134-154 (LLLFFIMWELELIPVYLLLSM), 167-187 (FILYTAGGSIFLLMGVLGMGL), 208-228 (ALEIIFYFGFLIAYAVKSPII), 242-262 (HYSTCMLLAGILLKMGAYGLV), 274-294 (SIFSPWLMIVGTIQIIYAALT), 305-325 (IAYSSVSHMGFIIIGISSITD), 330-350 (GAILQIISHGFIGAALFFLAG), 364-384 (MGGIAILMPRIFTMFSSFSMA), 386-406 (LALPGMSGFVAEFVIFLGIIT), 416-436 (ILITFVMAIGMILTPIYSLSM), and 462-482 (IFIFMCILLPIIGIGIYPDFV).

The protein belongs to the complex I subunit 4 family.

It localises to the plastid. The protein resides in the chloroplast thylakoid membrane. The catalysed reaction is a plastoquinone + NADH + (n+1) H(+)(in) = a plastoquinol + NAD(+) + n H(+)(out). It carries out the reaction a plastoquinone + NADPH + (n+1) H(+)(in) = a plastoquinol + NADP(+) + n H(+)(out). This Nymphaea alba (White water-lily) protein is NAD(P)H-quinone oxidoreductase chain 4, chloroplastic.